A 92-amino-acid polypeptide reads, in one-letter code: UPF0250 protein VC0395_A0469/VC395_0960 (92 aa).

The protein belongs to the UPF0250 family.

The sequence is that of UPF0250 protein VC0395_A0469/VC395_0960 from Vibrio cholerae serotype O1 (strain ATCC 39541 / Classical Ogawa 395 / O395).